A 102-amino-acid polypeptide reads, in one-letter code: RNA-binding protein Hfq (102 aa).

Residues 9-68 (DPFLNALRRERVPVSIYLVNGIKLQGQIESFDQFVILLKNTVSQMVYKHAISTVVPSRPV) form the Sm domain. The tract at residues 63-102 (VPSRPVSHHSNNASGGTSSNYHHGSSAQNTSAQQDSEETE) is disordered. Positions 70–96 (HHSNNASGGTSSNYHHGSSAQNTSAQQ) are enriched in polar residues.

The protein belongs to the Hfq family. Homohexamer.

In terms of biological role, RNA chaperone that binds small regulatory RNA (sRNAs) and mRNAs to facilitate mRNA translational regulation in response to envelope stress, environmental stress and changes in metabolite concentrations. Also binds with high specificity to tRNAs. This chain is RNA-binding protein Hfq, found in Shigella boydii serotype 18 (strain CDC 3083-94 / BS512).